Here is a 565-residue protein sequence, read N- to C-terminus: Thiol:disulfide interchange protein DsbD (565 aa).

Residues 1-19 (MAQRIFTLILLLCSTSVFA) form the signal peptide. Disulfide bonds link cysteine 122–cysteine 128 and cysteine 182–cysteine 304. 7 helical membrane passes run 163-183 (LPFSALWALLIGIGIAFTPCV), 208-228 (LLTFIYVQGMALTYTALGLVV), 243-263 (YVLIGLAIVFTLLAMSMFGLF), 289-309 (GVFIMGAIAGLICSPCTTAPL), 323-343 (WLGGGTLYLYALGMGLPLMLI), 357-377 (WMEQVKTAFGFVILALPVFLL), and 384-404 (IWGLRLWSALGVAFFGWAFIT). The region spanning 434 to 565 (WAFGATHTAQ…FSAHLRDRQP (132 aa)) is the Thioredoxin domain. Cysteine 480 and cysteine 483 form a disulfide bridge.

This sequence belongs to the thioredoxin family. DsbD subfamily.

The protein localises to the cell inner membrane. It catalyses the reaction [protein]-dithiol + NAD(+) = [protein]-disulfide + NADH + H(+). It carries out the reaction [protein]-dithiol + NADP(+) = [protein]-disulfide + NADPH + H(+). In terms of biological role, required to facilitate the formation of correct disulfide bonds in some periplasmic proteins and for the assembly of the periplasmic c-type cytochromes. Acts by transferring electrons from cytoplasmic thioredoxin to the periplasm. This transfer involves a cascade of disulfide bond formation and reduction steps. In Escherichia coli O6:H1 (strain CFT073 / ATCC 700928 / UPEC), this protein is Thiol:disulfide interchange protein DsbD.